We begin with the raw amino-acid sequence, 339 residues long: Meiotic recombination protein rec7 (339 aa).

Functionally, may be involved primarily in the early steps of meiotic recombination. This chain is Meiotic recombination protein rec7 (rec7), found in Schizosaccharomyces pombe (strain 972 / ATCC 24843) (Fission yeast).